A 207-amino-acid chain; its full sequence is Large ribosomal subunit protein uL4 (207 aa).

The tract at residues 57–78 is disordered; it reads VAGGGKKPWRQKGTGRARHGSI. Residues 63 to 77 show a composition bias toward basic residues; the sequence is KPWRQKGTGRARHGS.

The protein belongs to the universal ribosomal protein uL4 family. In terms of assembly, part of the 50S ribosomal subunit.

One of the primary rRNA binding proteins, this protein initially binds near the 5'-end of the 23S rRNA. It is important during the early stages of 50S assembly. It makes multiple contacts with different domains of the 23S rRNA in the assembled 50S subunit and ribosome. Functionally, forms part of the polypeptide exit tunnel. The sequence is that of Large ribosomal subunit protein uL4 from Onion yellows phytoplasma (strain OY-M).